The chain runs to 445 residues: Signal recognition particle 54 kDa protein (445 aa).

GTP contacts are provided by residues 102–109, 184–188, and 244–247; these read GVQGSGKT, DTAGR, and TKMD.

The protein belongs to the GTP-binding SRP family. SRP54 subfamily. In terms of assembly, part of the signal recognition particle protein translocation system, which is composed of SRP and FtsY. Archaeal SRP consists of a 7S RNA molecule of 300 nucleotides and two protein subunits: SRP54 and SRP19.

The protein resides in the cytoplasm. The enzyme catalyses GTP + H2O = GDP + phosphate + H(+). In terms of biological role, involved in targeting and insertion of nascent membrane proteins into the cytoplasmic membrane. Binds to the hydrophobic signal sequence of the ribosome-nascent chain (RNC) as it emerges from the ribosomes. The SRP-RNC complex is then targeted to the cytoplasmic membrane where it interacts with the SRP receptor FtsY. This Sulfurisphaera tokodaii (strain DSM 16993 / JCM 10545 / NBRC 100140 / 7) (Sulfolobus tokodaii) protein is Signal recognition particle 54 kDa protein.